The chain runs to 416 residues: Serine hydroxymethyltransferase (416 aa).

Residues Leu-118 and 122–124 (GHL) contribute to the (6S)-5,6,7,8-tetrahydrofolate site. Lys-226 carries the post-translational modification N6-(pyridoxal phosphate)lysine. Glu-242 lines the (6S)-5,6,7,8-tetrahydrofolate pocket.

Belongs to the SHMT family. In terms of assembly, homodimer. It depends on pyridoxal 5'-phosphate as a cofactor.

The protein resides in the cytoplasm. It catalyses the reaction (6R)-5,10-methylene-5,6,7,8-tetrahydrofolate + glycine + H2O = (6S)-5,6,7,8-tetrahydrofolate + L-serine. It participates in one-carbon metabolism; tetrahydrofolate interconversion. The protein operates within amino-acid biosynthesis; glycine biosynthesis; glycine from L-serine: step 1/1. Its function is as follows. Catalyzes the reversible interconversion of serine and glycine with tetrahydrofolate (THF) serving as the one-carbon carrier. This reaction serves as the major source of one-carbon groups required for the biosynthesis of purines, thymidylate, methionine, and other important biomolecules. Also exhibits THF-independent aldolase activity toward beta-hydroxyamino acids, producing glycine and aldehydes, via a retro-aldol mechanism. The chain is Serine hydroxymethyltransferase from Helicobacter pylori (strain J99 / ATCC 700824) (Campylobacter pylori J99).